A 67-amino-acid polypeptide reads, in one-letter code: MANQNSSNDLLVPGAAQAIDQMKLEIASEFGVNLGADTTSRANGSVGGEITKRLVSFAQQQMGGRVQ.

The protein belongs to the alpha/beta-type SASP family.

Functionally, SASP are bound to spore DNA. They are double-stranded DNA-binding proteins that cause DNA to change to an a-like conformation. They protect the DNA backbone from chemical and enzymatic cleavage and are thus involved in dormant spore's high resistance to UV light. The polypeptide is Small, acid-soluble spore protein B (sspB) (Bacillus subtilis (strain 168)).